The primary structure comprises 370 residues: Phosphoserine aminotransferase (370 aa).

Residue R38 coordinates L-glutamate. 4 residues coordinate pyridoxal 5'-phosphate: W101, T143, D166, and Q189. K190 carries the post-translational modification N6-(pyridoxal phosphate)lysine. A pyridoxal 5'-phosphate-binding site is contributed by 243-244 (NT).

This sequence belongs to the class-V pyridoxal-phosphate-dependent aminotransferase family. SerC subfamily. As to quaternary structure, homodimer. The cofactor is pyridoxal 5'-phosphate.

The protein resides in the cytoplasm. It carries out the reaction O-phospho-L-serine + 2-oxoglutarate = 3-phosphooxypyruvate + L-glutamate. It catalyses the reaction 4-(phosphooxy)-L-threonine + 2-oxoglutarate = (R)-3-hydroxy-2-oxo-4-phosphooxybutanoate + L-glutamate. The protein operates within amino-acid biosynthesis; L-serine biosynthesis; L-serine from 3-phospho-D-glycerate: step 2/3. It functions in the pathway cofactor biosynthesis; pyridoxine 5'-phosphate biosynthesis; pyridoxine 5'-phosphate from D-erythrose 4-phosphate: step 3/5. Functionally, catalyzes the reversible conversion of 3-phosphohydroxypyruvate to phosphoserine and of 3-hydroxy-2-oxo-4-phosphonooxybutanoate to phosphohydroxythreonine. This chain is Phosphoserine aminotransferase, found in Methanosarcina mazei (strain ATCC BAA-159 / DSM 3647 / Goe1 / Go1 / JCM 11833 / OCM 88) (Methanosarcina frisia).